Here is a 425-residue protein sequence, read N- to C-terminus: 5-aminovalerate aminotransferase DavT (425 aa).

Residues 112 to 113 (GS), tyrosine 139, and 240 to 243 (DEVQ) contribute to the pyridoxal 5'-phosphate site. The residue at position 269 (lysine 269) is an N6-(pyridoxal phosphate)lysine. Threonine 298 serves as a coordination point for pyridoxal 5'-phosphate.

Belongs to the class-III pyridoxal-phosphate-dependent aminotransferase family. Requires pyridoxal 5'-phosphate as cofactor.

It catalyses the reaction 5-aminopentanoate + 2-oxoglutarate = 5-oxopentanoate + L-glutamate. In terms of biological role, catalyzes the conversion of 5-aminovalerate to 5-oxopentanoate. The protein is 5-aminovalerate aminotransferase DavT (davT) of Pseudomonas putida (strain ATCC 47054 / DSM 6125 / CFBP 8728 / NCIMB 11950 / KT2440).